The primary structure comprises 397 residues: Ornithine aminotransferase (397 aa).

At K255 the chain carries N6-(pyridoxal phosphate)lysine.

It belongs to the class-III pyridoxal-phosphate-dependent aminotransferase family. OAT subfamily. Pyridoxal 5'-phosphate serves as cofactor.

The protein localises to the cytoplasm. The enzyme catalyses a 2-oxocarboxylate + L-ornithine = L-glutamate 5-semialdehyde + an L-alpha-amino acid. Its pathway is amino-acid biosynthesis; L-proline biosynthesis; L-glutamate 5-semialdehyde from L-ornithine: step 1/1. Functionally, catalyzes the interconversion of ornithine to glutamate semialdehyde. This Macrococcus caseolyticus (strain JCSC5402) (Macrococcoides caseolyticum) protein is Ornithine aminotransferase.